Consider the following 317-residue polypeptide: Tumor-associated calcium signal transducer 2 (317 aa).

The N-terminal stretch at 1-24 (MARGLDLAPLLLLLLAMVAGFCTA) is a signal peptide. Residues 25-270 (QINCTCPTNK…QFSMKRLTTG (246 aa)) are Extracellular-facing. A glycan (N-linked (GlcNAc...) asparagine) is linked at asparagine 27. The Thyroglobulin type-1 domain maps to 64 to 139 (TSKCLLLKAR…TDKGDQSLRC (76 aa)). 3 cysteine pairs are disulfide-bonded: cysteine 67/cysteine 102, cysteine 113/cysteine 119, and cysteine 121/cysteine 139. The N-linked (GlcNAc...) asparagine glycan is linked to asparagine 114. N-linked (GlcNAc...) asparagine glycans are attached at residues asparagine 162 and asparagine 202. A helical transmembrane segment spans residues 271–291 (LIAVIAVVAVALVAGVVVLVV). Topologically, residues 292-317 (TNRRKSGKYKKVELKELGEMRSEPSL) are cytoplasmic.

This sequence belongs to the EPCAM family.

Its subcellular location is the membrane. In terms of biological role, may function as a growth factor receptor. The polypeptide is Tumor-associated calcium signal transducer 2 (Tacstd2) (Rattus norvegicus (Rat)).